The following is a 233-amino-acid chain: Adenosine 5'-phosphosulfate reductase (233 aa).

The [4Fe-4S] cluster site is built by Cys120, Cys121, Cys203, and Cys206. Cys229 functions as the Nucleophile; cysteine thiosulfonate intermediate in the catalytic mechanism.

Belongs to the PAPS reductase family. CysH subfamily. The cofactor is [4Fe-4S] cluster.

Its subcellular location is the cytoplasm. It carries out the reaction [thioredoxin]-disulfide + sulfite + AMP + 2 H(+) = adenosine 5'-phosphosulfate + [thioredoxin]-dithiol. It functions in the pathway sulfur metabolism; hydrogen sulfide biosynthesis; sulfite from sulfate. Functionally, catalyzes the formation of sulfite from adenosine 5'-phosphosulfate (APS) using thioredoxin as an electron donor. The polypeptide is Adenosine 5'-phosphosulfate reductase (Lysinibacillus sphaericus (strain C3-41)).